The chain runs to 61 residues: Metallothionein-1 (61 aa).

Met1 carries the N-acetylmethionine modification. The beta stretch occupies residues 1-29; sequence MDPNCSCPTGGSCTCAGSCKCKACRCPSC. A divalent metal cation is bound by residues Cys5, Cys7, Cys13, Cys15, Cys19, Cys21, Cys24, Cys26, Cys29, Cys33, Cys34, Cys36, Cys37, Cys41, Cys44, Cys48, Cys50, Cys57, Cys59, and Cys60. The interval 30 to 61 is alpha; it reads KKSCCSCCPVGCAKCAQGCVCKGASDKCSCCA.

Belongs to the metallothionein superfamily. Type 1 family. Monomer.

Functionally, metallothioneins have a high content of cysteine residues that bind various heavy metals; these proteins are transcriptionally regulated by both heavy metals and glucocorticoids. This Bos taurus (Bovine) protein is Metallothionein-1 (MT1).